The following is a 490-amino-acid chain: Betaine aldehyde dehydrogenase (490 aa).

Positions 26, 27, and 93 each coordinate K(+). NAD(+) is bound at residue 150 to 152; it reads GAW. Catalysis depends on K162, which acts as the Charge relay system. 176-179 lines the NAD(+) pocket; the sequence is KPSE. Position 180 (V180) interacts with K(+). Position 230 to 233 (230 to 233) interacts with NAD(+); the sequence is GVAS. L246 is a K(+) binding site. The active-site Proton acceptor is E252. 3 residues coordinate NAD(+): G254, C286, and E387. C286 serves as the catalytic Nucleophile. C286 carries the post-translational modification Cysteine sulfenic acid (-SOH). K457 and G460 together coordinate K(+). Catalysis depends on E464, which acts as the Charge relay system.

Belongs to the aldehyde dehydrogenase family. Dimer of dimers. Requires K(+) as cofactor.

It catalyses the reaction betaine aldehyde + NAD(+) + H2O = glycine betaine + NADH + 2 H(+). It functions in the pathway amine and polyamine biosynthesis; betaine biosynthesis via choline pathway; betaine from betaine aldehyde: step 1/1. Functionally, involved in the biosynthesis of the osmoprotectant glycine betaine. Catalyzes the irreversible oxidation of betaine aldehyde to the corresponding acid. This is Betaine aldehyde dehydrogenase from Escherichia coli O9:H4 (strain HS).